The following is a 239-amino-acid chain: Phosphoribosylaminoimidazole-succinocarboxamide synthase (239 aa).

The protein belongs to the SAICAR synthetase family.

The catalysed reaction is 5-amino-1-(5-phospho-D-ribosyl)imidazole-4-carboxylate + L-aspartate + ATP = (2S)-2-[5-amino-1-(5-phospho-beta-D-ribosyl)imidazole-4-carboxamido]succinate + ADP + phosphate + 2 H(+). It functions in the pathway purine metabolism; IMP biosynthesis via de novo pathway; 5-amino-1-(5-phospho-D-ribosyl)imidazole-4-carboxamide from 5-amino-1-(5-phospho-D-ribosyl)imidazole-4-carboxylate: step 1/2. The polypeptide is Phosphoribosylaminoimidazole-succinocarboxamide synthase (Psychrobacter sp. (strain PRwf-1)).